The primary structure comprises 663 residues: Drug sensory protein A (663 aa).

Transmembrane regions (helical) follow at residues 32 to 52, 165 to 185, and 199 to 219; these read LMAAATLVVSLLMSGLTFWAV, VFIPLQYQGKFLGVLAIGINP, and VTIAVFISIWVMVILGAVFNA. Residues 220 to 272 form the HAMP domain; the sequence is LTITQPIKELLLGVKNIAAGNFKQRITLPFGGELGELIVNFNEMAERLERYEA. Positions 281 to 351 constitute a PAS domain; that stretch reads EKAKLDTLVS…QPLRELAADQ (71 aa). Residues 429-656 form the Histidine kinase domain; that stretch reads NVSHELRTPL…TFWFDLAVYQ (228 aa). Phosphohistidine; by autocatalysis is present on His432.

It is found in the cell membrane. It carries out the reaction ATP + protein L-histidine = ADP + protein N-phospho-L-histidine.. This is Drug sensory protein A (dspA) from Synechocystis sp. (strain ATCC 27184 / PCC 6803 / Kazusa).